The chain runs to 173 residues: Thiol-disulfide oxidoreductase ResA (173 aa).

A helical; Signal-anchor for type II membrane protein membrane pass occupies residues valine 10–phenylalanine 29. The Thioredoxin domain occupies methionine 35–proline 173. A disulfide bridge connects residues cysteine 73 and cysteine 76.

This sequence belongs to the thioredoxin family. ResA subfamily.

The protein resides in the cell membrane. Its pathway is protein modification; cytochrome c assembly. Thiol-disulfide oxidoreductase which is required in disulfide reduction during c-type cytochrome synthesis. May accept reducing equivalents from CcdA, leading to breakage of disulfide bonds in apocytochrome c; following this reduction heme can be covalently attached. The sequence is that of Thiol-disulfide oxidoreductase ResA from Bacillus thuringiensis subsp. konkukian (strain 97-27).